Here is a 133-residue protein sequence, read N- to C-terminus: Small ribosomal subunit protein uS8 (133 aa).

Belongs to the universal ribosomal protein uS8 family. As to quaternary structure, part of the 30S ribosomal subunit. Contacts proteins S5 and S12.

In terms of biological role, one of the primary rRNA binding proteins, it binds directly to 16S rRNA central domain where it helps coordinate assembly of the platform of the 30S subunit. In Prochlorococcus marinus (strain MIT 9515), this protein is Small ribosomal subunit protein uS8.